The chain runs to 175 residues: Large ribosomal subunit protein bL17 (175 aa).

A disordered region spans residues 127–175 (GEAEAATKRAVKEDALKKDEAPAAESVEDAKPAEDAPAAEAADDKGKDA). Over residues 131 to 147 (AATKRAVKEDALKKDEA) the composition is skewed to basic and acidic residues.

It belongs to the bacterial ribosomal protein bL17 family. In terms of assembly, part of the 50S ribosomal subunit. Contacts protein L32.

This is Large ribosomal subunit protein bL17 from Streptomyces griseus subsp. griseus (strain JCM 4626 / CBS 651.72 / NBRC 13350 / KCC S-0626 / ISP 5235).